The chain runs to 189 residues: Rho-related protein racM (189 aa).

Position 12 to 19 (12 to 19 (GDYGVGKT)) interacts with GTP. The Effector region motif lies at 35-43 (YVPTALDNF). Residues 60-64 (DTAGG) and 118-121 (TKID) contribute to the GTP site. C186 carries the cysteine methyl ester modification. A lipid anchor (S-geranylgeranyl cysteine) is attached at C186. The propeptide at 187-189 (IIL) is removed in mature form.

This sequence belongs to the small GTPase superfamily. Rho family.

Its subcellular location is the cell membrane. This Dictyostelium discoideum (Social amoeba) protein is Rho-related protein racM (racM).